Consider the following 61-residue polypeptide: Weak toxin CM-1c (61 aa).

4 disulfide bridges follow: C3-C21, C14-C37, C41-C53, and C54-C59.

The protein belongs to the three-finger toxin family. Short-chain subfamily. Orphan group VI sub-subfamily. In terms of tissue distribution, expressed by the venom gland.

It is found in the secreted. The protein is Weak toxin CM-1c of Hemachatus haemachatus (Rinkhals).